A 364-amino-acid polypeptide reads, in one-letter code: N-acetyl-gamma-glutamyl-phosphate reductase (364 aa).

Cys-157 is an active-site residue.

Belongs to the NAGSA dehydrogenase family. Type 1 subfamily.

It is found in the cytoplasm. It catalyses the reaction N-acetyl-L-glutamate 5-semialdehyde + phosphate + NADP(+) = N-acetyl-L-glutamyl 5-phosphate + NADPH + H(+). Its pathway is amino-acid biosynthesis; L-arginine biosynthesis; N(2)-acetyl-L-ornithine from L-glutamate: step 3/4. Functionally, catalyzes the NADPH-dependent reduction of N-acetyl-5-glutamyl phosphate to yield N-acetyl-L-glutamate 5-semialdehyde. The polypeptide is N-acetyl-gamma-glutamyl-phosphate reductase (Bifidobacterium longum (strain NCC 2705)).